The primary structure comprises 684 residues: Leishmanolysin-like peptidase (684 aa).

A Zn(2+)-binding site is contributed by histidine 257. Residue glutamate 258 is part of the active site. Zn(2+)-binding residues include histidine 261 and histidine 364.

The protein belongs to the peptidase M8 family. Zn(2+) serves as cofactor.

The protein localises to the cytoplasm. Functionally, essential for the coordination of mitotic progression, and also plays a role in cell migration. The sequence is that of Leishmanolysin-like peptidase from Drosophila pseudoobscura pseudoobscura (Fruit fly).